Consider the following 332-residue polypeptide: HPr kinase/phosphorylase (332 aa).

Active-site residues include H153 and K174. G168–S175 provides a ligand contact to ATP. Residue S175 coordinates Mg(2+). Catalysis depends on D192, which acts as the Proton acceptor; for phosphorylation activity. Proton donor; for dephosphorylation activity. Residues M217 to D226 form an important for the catalytic mechanism of both phosphorylation and dephosphorylation region. Position 218 (E218) interacts with Mg(2+). R259 is an active-site residue. Residues P280–K285 are important for the catalytic mechanism of dephosphorylation.

The protein belongs to the HPrK/P family. Homohexamer. Mg(2+) serves as cofactor.

The enzyme catalyses [HPr protein]-L-serine + ATP = [HPr protein]-O-phospho-L-serine + ADP + H(+). It carries out the reaction [HPr protein]-O-phospho-L-serine + phosphate + H(+) = [HPr protein]-L-serine + diphosphate. In terms of biological role, catalyzes the ATP- as well as the pyrophosphate-dependent phosphorylation of a specific serine residue in HPr, a phosphocarrier protein of the phosphoenolpyruvate-dependent sugar phosphotransferase system (PTS). HprK/P also catalyzes the pyrophosphate-producing, inorganic phosphate-dependent dephosphorylation (phosphorolysis) of seryl-phosphorylated HPr (P-Ser-HPr). This Chlorobium phaeovibrioides (strain DSM 265 / 1930) (Prosthecochloris vibrioformis (strain DSM 265)) protein is HPr kinase/phosphorylase.